The following is a 521-amino-acid chain: MSKANAKYSFVDLFAGIGGFHAALAATGGVCEYAVEIDREAAAVYERNWNKPALGDITDDANDEGVTLRGYDGPIDVLTGGFPCQPFSKSGAQHGMAETRGTLFWNIARIIEEREPTVLILENVRNLVGPRHRHEWLTIIETLRFFGYEVSGAPAIFSPHLLPAWMGGTPQVRERVFITATLVPERMRDERIPRTETGEIDAEAIGPKPVATMNDRFPIKKGGTELFHPGDRKSGWNLLTSGIIREGDPEPSNVDLRLTETETLWIDAWDDLESTIRRATGRPLEGFPYWADSWTDFRELSRLVVIRGFQAPEREVVGDRKRYVARTDMPEGFVPASVTRPAIDETLPAWKQSHLRRNYDFFERHFAEVVAWAYRWGVYTDLFPASRRKLEWQAQDAPRLWDTVMHFRPSGIRAKRPTYLPALVAITQTSIVGPLERRLSPRETARLQGLPEWFDFGEQRAAATYKQMGNGVNVGVVRHILREHVRRDRALLKLTPAGQRIINAVLADEPDATVGALGAAE.

An SAM-dependent MTase C5-type domain is found at tyrosine 8 to leucine 491. Residue cysteine 84 is part of the active site.

This sequence belongs to the class I-like SAM-binding methyltransferase superfamily. C5-methyltransferase family.

It catalyses the reaction a 2'-deoxycytidine in DNA + S-adenosyl-L-methionine = a 5-methyl-2'-deoxycytidine in DNA + S-adenosyl-L-homocysteine + H(+). Functionally, a methylase, recognizes the double-stranded sequence 5'-AGCT-3', methylates C-3 on both strands, and protects the DNA from cleavage by the AluI endonuclease. The chain is Type II methyltransferase M.AluI from Cellulosimicrobium cellulans (Arthrobacter luteus).